A 281-amino-acid chain; its full sequence is NAD-dependent protein deacetylase 3 (281 aa).

One can recognise a Deacetylase sirtuin-type domain in the interval 1 to 281 (MLDSPTLDLL…PWLAEQLITR (281 aa)). Residues 27–47 (GAGI…GVRR) and 105–108 (QNVD) contribute to the NAD(+) site. His-123 functions as the Proton acceptor in the catalytic mechanism. The Zn(2+) site is built by Cys-131, Cys-134, Cys-182, and Cys-185. Residues 223 to 225 (GTS), 249 to 251 (NHG), and Cys-267 contribute to the NAD(+) site.

This sequence belongs to the sirtuin family. Class II subfamily. The cofactor is Zn(2+).

The protein resides in the cytoplasm. The catalysed reaction is N(6)-acetyl-L-lysyl-[protein] + NAD(+) + H2O = 2''-O-acetyl-ADP-D-ribose + nicotinamide + L-lysyl-[protein]. Its function is as follows. NAD-dependent protein deacetylase which modulates the activities of several enzymes which are inactive in their acetylated form. This Pseudomonas syringae pv. tomato (strain ATCC BAA-871 / DC3000) protein is NAD-dependent protein deacetylase 3.